Here is a 125-residue protein sequence, read N- to C-terminus: Glycine cleavage system H protein (125 aa).

Residues S21–K103 enclose the Lipoyl-binding domain. At K62 the chain carries N6-lipoyllysine.

Belongs to the GcvH family. The glycine cleavage system is composed of four proteins: P, T, L and H. The cofactor is (R)-lipoate.

Functionally, the glycine cleavage system catalyzes the degradation of glycine. The H protein shuttles the methylamine group of glycine from the P protein to the T protein. In Psychromonas ingrahamii (strain DSM 17664 / CCUG 51855 / 37), this protein is Glycine cleavage system H protein.